The primary structure comprises 386 residues: ADP,ATP carrier protein, mitochondrial (386 aa).

Residues 1–77 (MADMNQHPTV…SNASPVFVQA (77 aa)) constitute a mitochondrion transit peptide. Solcar repeat units lie at residues 84 to 177 (AAFA…FKRL), 189 to 281 (KWFA…LKPV), and 289 to 375 (DSFF…LQVL). 5 helical membrane passes run 86 to 113 (FATD…VKLL), 154 to 178 (TANV…KRLF), 187 to 207 (YWKW…SSLF), 257 to 278 (FNIS…YDSL), and 292 to 312 (FASF…SYPI). ADP contacts are provided by R159 and K171. R316 contacts ADP. Residues 316 to 321 (RRRMMM) are important for transport activity. The Nucleotide carrier signature motif signature appears at 316-321 (RRRMMM). Residues 352–372 (AGANILRAVAGAGVLAGYDKL) traverse the membrane as a helical segment.

The protein belongs to the mitochondrial carrier (TC 2.A.29) family. As to quaternary structure, monomer.

It is found in the mitochondrion inner membrane. It carries out the reaction ADP(in) + ATP(out) = ADP(out) + ATP(in). Its activity is regulated as follows. The matrix-open state (m-state) is inhibited by the membrane-permeable bongkrekic acid (BKA). The cytoplasmic-open state (c-state) is inhibited by the membrane-impermeable toxic inhibitor carboxyatractyloside (CATR). In terms of biological role, ADP:ATP antiporter that mediates import of ADP into the mitochondrial matrix for ATP synthesis, and export of ATP out to fuel the cell. Cycles between the cytoplasmic-open state (c-state) and the matrix-open state (m-state): operates by the alternating access mechanism with a single substrate-binding site intermittently exposed to either the cytosolic (c-state) or matrix (m-state) side of the inner mitochondrial membrane. The protein is ADP,ATP carrier protein, mitochondrial (ANT) of Solanum tuberosum (Potato).